Consider the following 355-residue polypeptide: UDP-N-acetylglucosamine--N-acetylmuramyl-(pentapeptide) pyrophosphoryl-undecaprenol N-acetylglucosamine transferase (355 aa).

Residues Thr-14 to Gly-16, Asn-126, Arg-162, Ser-190, Ile-243, Ala-262 to Glu-267, and Gln-287 contribute to the UDP-N-acetyl-alpha-D-glucosamine site.

Belongs to the glycosyltransferase 28 family. MurG subfamily.

It localises to the cell inner membrane. The catalysed reaction is di-trans,octa-cis-undecaprenyl diphospho-N-acetyl-alpha-D-muramoyl-L-alanyl-D-glutamyl-meso-2,6-diaminopimeloyl-D-alanyl-D-alanine + UDP-N-acetyl-alpha-D-glucosamine = di-trans,octa-cis-undecaprenyl diphospho-[N-acetyl-alpha-D-glucosaminyl-(1-&gt;4)]-N-acetyl-alpha-D-muramoyl-L-alanyl-D-glutamyl-meso-2,6-diaminopimeloyl-D-alanyl-D-alanine + UDP + H(+). Its pathway is cell wall biogenesis; peptidoglycan biosynthesis. Cell wall formation. Catalyzes the transfer of a GlcNAc subunit on undecaprenyl-pyrophosphoryl-MurNAc-pentapeptide (lipid intermediate I) to form undecaprenyl-pyrophosphoryl-MurNAc-(pentapeptide)GlcNAc (lipid intermediate II). The protein is UDP-N-acetylglucosamine--N-acetylmuramyl-(pentapeptide) pyrophosphoryl-undecaprenol N-acetylglucosamine transferase of Vibrio vulnificus (strain CMCP6).